The sequence spans 1171 residues: MSGKMKTMDGNAAAAWISYAFTEVAAIYPITPSTPMAENVDEWAAQGKKNLFGQPVRLMEMQSEAGAAGAVHGALQAGALTTTYTASQGLLLMIPNMYKIAGELLPGVFHVSARALATNSLNIFGDHQDVMAVRQTGCAMLAENNVQQVMDLSAVAHLAAIKGRIPFVNFFDGFRTSHEIQKIEVLEYEQLATLLDRPALDSFRRNALHPDHPVIRGTAQNPDIYFQEREAGNRFYQALPDIVESYMTQISALTGREYHLFNYTGAADAERVIIAMGSVCDTVQEVVDTLNAAGEKVGLLSVHLFRPFSLAHFFAQLPKTVQRIAVLDRTKEPGAQAEPLCLDVKNAFYHHDDAPLIVGGRYALGGKDVLPNDIAAVFDNLNKPLPMDGFTLGIVDDVTFTSLPPAQQTLAVSHDGITACKFWGMGSDGTVGANKSAIKIIGDKTPLYAQAYFSYDSKKSGGITVSHLRFGDRPINSPYLIHRADFISCSQQSYVERYDLLDGLKPGGTFLLNCSWSDAELEQHLPVGFKRYLARENIHFYTLNAVDIARELGLGGRFNMLMQAAFFKLAAIIDPQTAADYLKQAVEKSYGSKGAAVIEMNQRAIELGMASLHQVTIPAHWATLDEPAAQASAMMPDFIRDILQPMNRQCGDQLPVSAFVGMEDGTFPSGTAAWEKRGIALEVPVWQPEGCTQCNQCAFICPHAAIRPALLNGEEHDAAPVGLLSKPAQGAKEYHYHLAISPLDCSGCGNCVDICPARGKALKMQSLDSQRQMAPVWDYALALTPKSNPFRKTTVKGSQFETPLLEFSGACAGCGETPYARLITQLFGDRMLIANATGCSSIWGASAPSIPYTTNHRGHGPAWANSLFEDNAEFGLGMMLGGQAVRQQIADDMTAALALPVSDELSDAMRQWLAKQDEGEGTRERADRLSERLAAEKEGVPLLEQLWQNRDYFVRRSQWIFGGDGWAYDIGFGGLDHVLASGEDVNILVFDTEVYSNTGGQSSKSTPVAAIAKFAAQGKRTRKKDLGMMAMSYGNVYVAQVAMGADKDQTLRAIAEAEAWPGPSLVIAYAACINHGLKAGMRCSQREAKRAVEAGYWHLWRYHPQREAEGKTPFMLDSEEPEESFRDFLLGEVRYASLHKTTPHLADALFSRTEEDARARFAQYRRLAGEE.

2 consecutive 4Fe-4S ferredoxin-type domains span residues 682 to 711 and 736 to 767; these read EVPVWQPEGCTQCNQCAFICPHAAIRPALL and YHLAISPLDCSGCGNCVDICPARGKALKMQSL. Residues C691, C694, C697, C701, C745, C748, C751, C755, C811, C814, C839, and C1072 each contribute to the [4Fe-4S] cluster site.

It belongs to the pyruvate:ferredoxin/flavodoxin oxidoreductase family. [4Fe-4S] cluster serves as cofactor.

It carries out the reaction oxidized [flavodoxin] + pyruvate + CoA + 2 H(+) = reduced [flavodoxin] + acetyl-CoA + CO2. In terms of biological role, oxidoreductase required for the transfer of electrons from pyruvate to flavodoxin, which reduces nitrogenase. In Klebsiella pneumoniae, this protein is Pyruvate-flavodoxin oxidoreductase (nifJ).